A 91-amino-acid polypeptide reads, in one-letter code: Small ribosomal subunit protein bS20 (91 aa).

The segment at 72–91 (KNAASRQKSRLAKKLNGLSA) is disordered.

Belongs to the bacterial ribosomal protein bS20 family.

In terms of biological role, binds directly to 16S ribosomal RNA. The protein is Small ribosomal subunit protein bS20 of Halalkalibacterium halodurans (strain ATCC BAA-125 / DSM 18197 / FERM 7344 / JCM 9153 / C-125) (Bacillus halodurans).